Here is a 324-residue protein sequence, read N- to C-terminus: tRNA N6-adenosine threonylcarbamoyltransferase (324 aa).

Positions 107, 111, and 127 each coordinate Fe cation. Residues Tyr127–Gly131, Asp159, Gly172, Glu176, and Asn257 each bind substrate. Asp285 serves as a coordination point for Fe cation.

This sequence belongs to the KAE1 / TsaD family. In terms of assembly, monomer. Component of the KEOPS complex that consists of Kae1, Bud32, Cgi121 and Pcc1; the whole complex dimerizes. The cofactor is Fe(2+).

It localises to the cytoplasm. It carries out the reaction L-threonylcarbamoyladenylate + adenosine(37) in tRNA = N(6)-L-threonylcarbamoyladenosine(37) in tRNA + AMP + H(+). Functionally, required for the formation of a threonylcarbamoyl group on adenosine at position 37 (t(6)A37) in tRNAs that read codons beginning with adenine. Is a component of the KEOPS complex that is probably involved in the transfer of the threonylcarbamoyl moiety of threonylcarbamoyl-AMP (TC-AMP) to the N6 group of A37. Kae1 likely plays a direct catalytic role in this reaction, but requires other protein(s) of the complex to fulfill this activity. In vitro, binds tRNA, ssRNA, both single- and double-stranded DNA, and exhibits a low ATPase activity. The chain is tRNA N6-adenosine threonylcarbamoyltransferase from Pyrococcus abyssi (strain GE5 / Orsay).